Here is a 101-residue protein sequence, read N- to C-terminus: uncharacterized protein (101 aa).

Helical transmembrane passes span 3 to 23 (IVYEYAISTNWIWLYVWLFLF) and 39 to 59 (AFLSLPPIVSFALSVATLIFF).

It localises to the membrane. This is an uncharacterized protein from Saccharomyces cerevisiae (strain ATCC 204508 / S288c) (Baker's yeast).